A 784-amino-acid chain; its full sequence is Probable leucine-rich repeat receptor-like protein kinase IMK3 (784 aa).

The first 48 residues, 1–48 (MEFITQNQAITSLSMINTDIDQPKASLRSRFLLHLIICLLFFVPPCSS), serve as a signal peptide directing secretion. Residues 49 to 409 (QAWDGVVITQ…PSHRNLSTKD (361 aa)) are Extracellular-facing. The N-linked (GlcNAc...) asparagine glycan is linked to Asn-82. LRR repeat units follow at residues 126–148 (ALRKLSLHDNNLGGSIPMSLGLI), 150–172 (NLRGVQLFNNRLTGSIPASLGVS), 174–197 (FLQTLDLSNNLLSEIIPPNLADSS), 198–220 (KLLRLNLSFNSLSGQIPVSLSRS), 222–242 (SLQFLALDHNNLSGPILDTWG), 247–268 (NLRVLSLDHNSLSGPFPFSLCN), 271–294 (QLQDFSFSHNRIRGTLPSELSKLT), 295–317 (KLRKMDISGNSVSGHIPETLGNI), 319–342 (SLIHLDLSQNKLTGEIPISISDLE), and 343–365 (SLNFFNVSYNNLSGPVPTLLSQK). N-linked (GlcNAc...) asparagine glycans are attached at residues Asn-203, Asn-232, and Asn-268. Asn-316 carries N-linked (GlcNAc...) asparagine glycosylation. 4 N-linked (GlcNAc...) asparagine glycosylation sites follow: Asn-348, Asn-353, Asn-367, and Asn-404. Residues 410–430 (IILIASGALLIVMLILVCVLC) traverse the membrane as a helical segment. The Cytoplasmic segment spans residues 431–784 (CLLRKKANET…VPEASASTSQ (354 aa)). The segment at 441–467 (KAKGGEAGPGAVAAKTEKGGEAEAGGE) is disordered. One can recognise a Protein kinase domain in the interval 488-773 (CATAEIMGKS…TTATTSEPLI (286 aa)). ATP contacts are provided by residues 494–502 (MGKSTYGTV) and Lys-516. The tract at residues 760-784 (RPEETTATTSEPLIDVPEASASTSQ) is disordered.

It belongs to the protein kinase superfamily. Ser/Thr protein kinase family. As to quaternary structure, interacts with AGL24. Post-translationally, autophosphorylated. Expressed in meristems, including roots, vegetative, inflorescence and floral meristems, and in embryos.

Its subcellular location is the cell membrane. It catalyses the reaction L-seryl-[protein] + ATP = O-phospho-L-seryl-[protein] + ADP + H(+). It carries out the reaction L-threonyl-[protein] + ATP = O-phospho-L-threonyl-[protein] + ADP + H(+). Its function is as follows. Can phosphorylate AGL24. The sequence is that of Probable leucine-rich repeat receptor-like protein kinase IMK3 (IMK3) from Arabidopsis thaliana (Mouse-ear cress).